Here is a 179-residue protein sequence, read N- to C-terminus: UPF0302 protein BPUM_1989 (179 aa).

It belongs to the UPF0302 family.

The sequence is that of UPF0302 protein BPUM_1989 from Bacillus pumilus (strain SAFR-032).